Here is a 425-residue protein sequence, read N- to C-terminus: uncharacterized protein (425 aa).

An HD domain is found at 55 to 181; it reads RYSHSLGVYE…DLDADRMDYL (127 aa).

This is an uncharacterized protein from Mycoplasma pneumoniae (strain ATCC 29342 / M129 / Subtype 1) (Mycoplasmoides pneumoniae).